Here is a 555-residue protein sequence, read N- to C-terminus: Myo-inositol transporter 2 (555 aa).

Topologically, residues 1–61 (MSSTLDTITP…NLVRAENEDK (61 aa)) are cytoplasmic. A helical membrane pass occupies residues 62 to 82 (VTPYFMFLISVAAIAGFLFGY). Over 83-108 (DTGIVGAALPMVGTSLGHTLSATESE) the chain is Extracellular. Residues 109–129 (IITAGTTIGAIFGASILGTMA) form a helical membrane-spanning segment. Residues 130 to 142 (DKLGRKWAMIISD) lie on the Cytoplasmic side of the membrane. A helical membrane pass occupies residues 143-163 (FAFTAGAIIIAASYSVPQIIV). Over 164–165 (GR) the chain is Extracellular. The chain crosses the membrane as a helical span at residues 166–186 (LVLGVGVGGAAVIAPLYIAEL). The Cytoplasmic portion of the chain corresponds to 187–200 (APTAVRGRCVGANA). Residues 201-221 (FCIPFGQVVASAIGAGFQAGV) form a helical membrane-spanning segment. The Extracellular portion of the chain corresponds to 222-228 (PYHIGWR). Residues 229–249 (VLFGLGVVPSVVQLCLMHFLP) traverse the membrane as a helical segment. The Cytoplasmic portion of the chain corresponds to 250 to 328 (ESPRVLVLRG…AIISVSGVQA (79 aa)). Residues 329 to 349 (FGQLTGFNTLLYYSGTIFGLL) form a helical membrane-spanning segment. The Extracellular portion of the chain corresponds to 350-355 (GLKNGA). Residues 356–376 (AAGLIPSCLNALFVFIGMSIV) traverse the membrane as a helical segment. At 377–385 (DKVGRRKLM) the chain is on the cytoplasmic side. Residues 386-406 (ITFIPGMMIAFTWTIISFHFL) traverse the membrane as a helical segment. The Extracellular segment spans residues 407–427 (TKPTGGLLLKDYQYSTPLVGS). Residues 428–448 (VLGSIVLFVIPFGLTYSHIIW) traverse the membrane as a helical segment. The Cytoplasmic portion of the chain corresponds to 449 to 461 (YQSEFLPLEIRAA). Residues 462-482 (GSAISTTACWLANLVVSVAYL) form a helical membrane-spanning segment. Residues 483 to 487 (TQLEK) are Extracellular-facing. The chain crosses the membrane as a helical span at residues 488–508 (LGATGTYGLYLGFITIGYIFV). Topologically, residues 509–555 (YFCYPETKGLSIDETAEIFIDGFGIEKAHQMLREKRAFAAELYAGRA) are cytoplasmic.

This sequence belongs to the major facilitator superfamily. Sugar transporter (TC 2.A.1.1) family.

It is found in the cell membrane. The enzyme catalyses myo-inositol(out) + H(+)(out) = myo-inositol(in) + H(+)(in). Functionally, transporter for myo-inositol. This chain is Myo-inositol transporter 2, found in Cryptococcus neoformans var. grubii serotype A (strain H99 / ATCC 208821 / CBS 10515 / FGSC 9487) (Filobasidiella neoformans var. grubii).